We begin with the raw amino-acid sequence, 93 residues long: Small ribosomal subunit protein bS20 (93 aa).

Residues 1–18 are compositionally biased toward basic and acidic residues; sequence MPLHKSAEKRLRQSEKRN. Residues 1–25 are disordered; it reads MPLHKSAEKRLRQSEKRNARNRARK.

Belongs to the bacterial ribosomal protein bS20 family.

Functionally, binds directly to 16S ribosomal RNA. This chain is Small ribosomal subunit protein bS20, found in Chlorobium chlorochromatii (strain CaD3).